The chain runs to 201 residues: Small ribosomal subunit protein uS4c (201 aa).

Residues 89–150 (MRLDNILFRL…KQRSKVLIQN (62 aa)) form the S4 RNA-binding domain.

It belongs to the universal ribosomal protein uS4 family. As to quaternary structure, part of the 30S ribosomal subunit. Contacts protein S5. The interaction surface between S4 and S5 is involved in control of translational fidelity.

The protein localises to the plastid. It localises to the chloroplast. Functionally, one of the primary rRNA binding proteins, it binds directly to 16S rRNA where it nucleates assembly of the body of the 30S subunit. Its function is as follows. With S5 and S12 plays an important role in translational accuracy. In Dioscorea elephantipes (Elephant's foot yam), this protein is Small ribosomal subunit protein uS4c (rps4).